Here is a 64-residue protein sequence, read N- to C-terminus: Large ribosomal subunit protein bL32 (64 aa).

This sequence belongs to the bacterial ribosomal protein bL32 family.

The chain is Large ribosomal subunit protein bL32 from Flavobacterium johnsoniae (strain ATCC 17061 / DSM 2064 / JCM 8514 / BCRC 14874 / CCUG 350202 / NBRC 14942 / NCIMB 11054 / UW101) (Cytophaga johnsonae).